The chain runs to 326 residues: Type II secretion system protein K (326 aa).

A propeptide spans 1–7 (MNHRQRG) (leader sequence). Residues 8–28 (IALLMVLLILALMMVLASAMT) form a helical membrane-spanning segment. Over 29–326 (ERSARMYQQT…RYGIYWVADE (298 aa)) the chain is Periplasmic.

The protein belongs to the GSP K family. As to quaternary structure, type II secretion is composed of four main components: the outer membrane complex, the inner membrane complex, the cytoplasmic secretion ATPase and the periplasm-spanning pseudopilus. Interacts with core component PulG. In terms of processing, cleaved by prepilin peptidase.

The protein localises to the cell inner membrane. Its function is as follows. Component of the type II secretion system required for the energy-dependent secretion of extracellular factors such as proteases and toxins from the periplasm. Plays a role in pseudopilus assembly and seems to control its length. Interacts with the pseudopilus tip complex that is critical for the recognition and binding of secretion substrates. In Klebsiella pneumoniae, this protein is Type II secretion system protein K (pulK).